The following is a 496-amino-acid chain: Nectin 1a (496 aa).

The first 20 residues, 1–20 (MMFINLLLRLMCVFLIGADG), serve as a signal peptide directing secretion. The Extracellular segment spans residues 21 to 349 (QMVQMESSKA…FQDQQQAGVV (329 aa)). Positions 34 to 138 (GSQVELPCQF…GNRENMVNLT (105 aa)) constitute an Ig-like V-type domain. Residues C41 and C121 are joined by a disulfide bond. N62 and N136 each carry an N-linked (GlcNAc...) asparagine glycan. 2 consecutive Ig-like C2-type domains span residues 143-238 (PMIQ…VTLN) and 243-330 (PEVI…VIVT). Disulfide bonds link C168–C222 and C265–C312. N-linked (GlcNAc...) asparagine glycosylation occurs at N282. Residues 350 to 370 (IGGAVVCGTVLLAAVTLLVVF) form a helical membrane-spanning segment. Residues 371-496 (LYRRRCMFKG…SVISKEEWYV (126 aa)) lie on the Cytoplasmic side of the membrane.

This sequence belongs to the nectin family. In terms of assembly, cis- and trans-homodimer. Can form trans-heterodimers. In terms of tissue distribution, expressed in the developing eye and nervous system.

Its subcellular location is the cell membrane. The protein resides in the cell junction. It localises to the adherens junction. In terms of biological role, cell adhesion molecule that promotes cell-cell contacts and plays important roles in the development of the nervous system. Acts by forming homophilic or heterophilic trans-dimers. The polypeptide is Nectin 1a (Danio rerio (Zebrafish)).